The following is a 425-amino-acid chain: 3-isopropylmalate dehydratase large subunit (425 aa).

Positions 305, 365, and 368 each coordinate [4Fe-4S] cluster.

It belongs to the aconitase/IPM isomerase family. LeuC type 2 subfamily. In terms of assembly, heterodimer of LeuC and LeuD. Requires [4Fe-4S] cluster as cofactor.

The enzyme catalyses (2R,3S)-3-isopropylmalate = (2S)-2-isopropylmalate. Its pathway is amino-acid biosynthesis; L-leucine biosynthesis; L-leucine from 3-methyl-2-oxobutanoate: step 2/4. Catalyzes the isomerization between 2-isopropylmalate and 3-isopropylmalate, via the formation of 2-isopropylmaleate. The protein is 3-isopropylmalate dehydratase large subunit of Clostridioides difficile (strain 630) (Peptoclostridium difficile).